The primary structure comprises 728 residues: Probable ubiquitin-conjugating enzyme protein 17 (728 aa).

The segment covering 1–17 (MSSQASQRSSSTSAVAQ) has biased composition (low complexity). 2 disordered regions span residues 1 to 23 (MSSQASQRSSSTSAVAQKTRERR) and 123 to 155 (SSRSADEQKRRARRNSSASLSHKGTGYGTGSTR). Residues 402–568 (DRTKRIAKEL…IEHATLNYAI (167 aa)) enclose the UBC core domain. Cys495 acts as the Glycyl thioester intermediate in catalysis. Disordered regions lie at residues 649–678 (PFAKEEAEESERLKREQSEKEEKQKKEAAA) and 709–728 (RTQPTGDYSVPSVNEPSTSS). Residues 658–678 (SERLKREQSEKEEKQKKEAAA) show a composition bias toward basic and acidic residues. Over residues 710 to 728 (TQPTGDYSVPSVNEPSTSS) the composition is skewed to polar residues.

It belongs to the ubiquitin-conjugating enzyme family.

The polypeptide is Probable ubiquitin-conjugating enzyme protein 17 (ubc-17) (Caenorhabditis elegans).